Here is a 455-residue protein sequence, read N- to C-terminus: Argininosuccinate lyase (455 aa).

It belongs to the lyase 1 family. Argininosuccinate lyase subfamily.

The protein localises to the cytoplasm. The enzyme catalyses 2-(N(omega)-L-arginino)succinate = fumarate + L-arginine. The protein operates within amino-acid biosynthesis; L-arginine biosynthesis; L-arginine from L-ornithine and carbamoyl phosphate: step 3/3. The polypeptide is Argininosuccinate lyase (Shewanella baltica (strain OS155 / ATCC BAA-1091)).